A 101-amino-acid chain; its full sequence is Small ribosomal subunit protein uS14 (101 aa).

It belongs to the universal ribosomal protein uS14 family. Part of the 30S ribosomal subunit. Contacts proteins S3 and S10.

In terms of biological role, binds 16S rRNA, required for the assembly of 30S particles and may also be responsible for determining the conformation of the 16S rRNA at the A site. The sequence is that of Small ribosomal subunit protein uS14 from Sphingopyxis alaskensis (strain DSM 13593 / LMG 18877 / RB2256) (Sphingomonas alaskensis).